A 327-amino-acid polypeptide reads, in one-letter code: DNA-directed RNA polymerase subunit alpha (327 aa).

The alpha N-terminal domain (alpha-NTD) stretch occupies residues 1-243 (MEKFLKYEIK…EHLNPIVNVN (243 aa)). The alpha C-terminal domain (alpha-CTD) stretch occupies residues 260 to 327 (RVRSFAKQIE…VHELGLKLRS (68 aa)).

Belongs to the RNA polymerase alpha chain family. As to quaternary structure, homodimer. The RNAP catalytic core consists of 2 alpha, 1 beta, 1 beta' and 1 omega subunit. When a sigma factor is associated with the core the holoenzyme is formed, which can initiate transcription.

The enzyme catalyses RNA(n) + a ribonucleoside 5'-triphosphate = RNA(n+1) + diphosphate. Its function is as follows. DNA-dependent RNA polymerase catalyzes the transcription of DNA into RNA using the four ribonucleoside triphosphates as substrates. The sequence is that of DNA-directed RNA polymerase subunit alpha from Mycoplasma pneumoniae (strain ATCC 29342 / M129 / Subtype 1) (Mycoplasmoides pneumoniae).